A 140-amino-acid chain; its full sequence is NTF2-related export protein 1 (140 aa).

Alanine 2 carries the post-translational modification N-acetylalanine. In terms of domain architecture, NTF2 spans alanine 16 to phenylalanine 135.

In terms of assembly, heterodimer with NXF1. Forms a complex with RANGAP1, RANBP2/NUP358 and NXF1. Interacts (via NTF2 domain) with NXF1. Stabilizes the NTF2 domain of NXF1 by heterodimerization. The formation of NXF1-NXT1 heterodimers is required for the NXF1-mediated nuclear mRNA export. Preferentially binds Ran-GTP. Associates with NXF2, NXF3 and NXF5. Does not bind nucleoporins (NPC) directly, its association to NPC is mediated by NXF1.

It localises to the nucleus. The protein localises to the nucleus speckle. Its subcellular location is the cytoplasm. In terms of biological role, stimulator of protein export for NES-containing proteins. Also plays a role in the nuclear export of U1 snRNA, tRNA, and mRNA. The NXF1-NXT1 heterodimer is involved in the export of HSP70 mRNA in conjunction with ALYREF/THOC4 and THOC5. In Bos taurus (Bovine), this protein is NTF2-related export protein 1 (NXT1).